A 458-amino-acid chain; its full sequence is tRNA modification GTPase MnmE (458 aa).

Positions 22, 84, and 123 each coordinate (6S)-5-formyl-5,6,7,8-tetrahydrofolate. Residues 220 to 379 form the TrmE-type G domain; it reads GIATAIIGRP…LEKAIADLFF (160 aa). Residue Asn-230 coordinates K(+). Residues 230–235, 249–255, and 274–277 contribute to the GTP site; these read NVGKSS, TDIAGTT, and DTAG. Ser-234 contributes to the Mg(2+) binding site. 3 residues coordinate K(+): Thr-249, Ile-251, and Thr-254. Position 255 (Thr-255) interacts with Mg(2+). A (6S)-5-formyl-5,6,7,8-tetrahydrofolate-binding site is contributed by Lys-458.

This sequence belongs to the TRAFAC class TrmE-Era-EngA-EngB-Septin-like GTPase superfamily. TrmE GTPase family. In terms of assembly, homodimer. Heterotetramer of two MnmE and two MnmG subunits. It depends on K(+) as a cofactor.

It localises to the cytoplasm. Its function is as follows. Exhibits a very high intrinsic GTPase hydrolysis rate. Involved in the addition of a carboxymethylaminomethyl (cmnm) group at the wobble position (U34) of certain tRNAs, forming tRNA-cmnm(5)s(2)U34. The protein is tRNA modification GTPase MnmE of Bacillus cereus (strain ATCC 14579 / DSM 31 / CCUG 7414 / JCM 2152 / NBRC 15305 / NCIMB 9373 / NCTC 2599 / NRRL B-3711).